Consider the following 193-residue polypeptide: Probable nicotinate-nucleotide adenylyltransferase (193 aa).

This sequence belongs to the NadD family.

It carries out the reaction nicotinate beta-D-ribonucleotide + ATP + H(+) = deamido-NAD(+) + diphosphate. Its pathway is cofactor biosynthesis; NAD(+) biosynthesis; deamido-NAD(+) from nicotinate D-ribonucleotide: step 1/1. Functionally, catalyzes the reversible adenylation of nicotinate mononucleotide (NaMN) to nicotinic acid adenine dinucleotide (NaAD). This Chlorobium phaeovibrioides (strain DSM 265 / 1930) (Prosthecochloris vibrioformis (strain DSM 265)) protein is Probable nicotinate-nucleotide adenylyltransferase.